Here is a 354-residue protein sequence, read N- to C-terminus: Neutral protease 2 homolog AN7962 (354 aa).

Residues 1 to 19 (MKFIAPIALLGMFQAASAS) form the signal peptide. Residues 20-178 (PVDIKTSNAG…GAQLSKLSKR (159 aa)) constitute a propeptide that is removed on maturation. Intrachain disulfides connect cysteine 184–cysteine 255 and cysteine 262–cysteine 280. A Zn(2+)-binding site is contributed by histidine 305. Glutamate 306 is a catalytic residue. The Zn(2+) site is built by histidine 309 and aspartate 320.

The protein belongs to the peptidase M35 family. Zn(2+) serves as cofactor.

It localises to the secreted. It catalyses the reaction Preferential cleavage of bonds with hydrophobic residues in P1'. Also 3-Asn-|-Gln-4 and 8-Gly-|-Ser-9 bonds in insulin B chain.. Secreted metalloproteinase that allows assimilation of proteinaceous substrates. Shows high activities on basic nuclear substrates such as histone and protamine. In Emericella nidulans (strain FGSC A4 / ATCC 38163 / CBS 112.46 / NRRL 194 / M139) (Aspergillus nidulans), this protein is Neutral protease 2 homolog AN7962.